We begin with the raw amino-acid sequence, 201 residues long: Probable chemoreceptor glutamine deamidase CheD 1 (201 aa).

It belongs to the CheD family.

The enzyme catalyses L-glutaminyl-[protein] + H2O = L-glutamyl-[protein] + NH4(+). Probably deamidates glutamine residues to glutamate on methyl-accepting chemotaxis receptors (MCPs), playing an important role in chemotaxis. This is Probable chemoreceptor glutamine deamidase CheD 1 from Geobacter sulfurreducens (strain ATCC 51573 / DSM 12127 / PCA).